A 139-amino-acid chain; its full sequence is Small ribosomal subunit protein uS12 (139 aa).

Asp-102 carries the post-translational modification 3-methylthioaspartic acid.

The protein belongs to the universal ribosomal protein uS12 family. In terms of assembly, part of the 30S ribosomal subunit. Contacts proteins S8 and S17. May interact with IF1 in the 30S initiation complex.

Its function is as follows. With S4 and S5 plays an important role in translational accuracy. In terms of biological role, interacts with and stabilizes bases of the 16S rRNA that are involved in tRNA selection in the A site and with the mRNA backbone. Located at the interface of the 30S and 50S subunits, it traverses the body of the 30S subunit contacting proteins on the other side and probably holding the rRNA structure together. The combined cluster of proteins S8, S12 and S17 appears to hold together the shoulder and platform of the 30S subunit. The sequence is that of Small ribosomal subunit protein uS12 from Bacillus pumilus (strain SAFR-032).